A 647-amino-acid polypeptide reads, in one-letter code: MIKITFPDGAVREFESGVTTFDIAESISKSLAKKALAGKFNDQLIDTTRAIEEDGSIEIVTPDHKDAYEVLRHSAAHLFAQAAKRLFPNLHLGVGPAIAEGFYYDTDNAEGQISNEDLPRIEAEMQKIVTENYPCIREEVTKEEALELFKDDPYKVELINEHAGAGLTVYRQGEFVDLCRGPHVPSTGRIQVFHLLNVAGAYWRGNSDNNMMQRIYGTAWFDKKDLKAYLTRLEEAKERDHRKLGKELDLFMISQEVGQGLPFWLPDGATIRRTLERYITDKELASGYQHVYTPPLASVELYKTSGHWDHYQEDMFPVMDMGDGEEFVLRPMNCPHHIQVYKNHVRSYRELPIRIAELGMMHRYEKSGALSGLQRVREMTLNDGHIFVTPEQIQEEFQRALQLIIDVYADFNLTDYRFRLSYRDPNDTHKYYDNDEMWENAQSMLKAALDEMGVDYFEAEGEAAFYGPKLDIQVKTALGNEETLSTIQLDFLLPERFDLKYIGADGEEHRPVMIHRGVISTMERFTAILIETYKGAFPTWLAPHQVTVIPISNEAHIDYAWEVAKTLRDRGVRADVDDRNEKMQYKIRASQTSKIPYQLIVGDKEMEDKSVNVRRYGSKTTHTESVEEFVENILADIARKSRPDAQA.

The region spanning 1 to 61 (MIKITFPDGA…EEDGSIEIVT (61 aa)) is the TGS domain. A catalytic region spans residues 240-538 (DHRKLGKELD…LIETYKGAFP (299 aa)). Residues Cys-334, His-385, and His-515 each contribute to the Zn(2+) site.

The protein belongs to the class-II aminoacyl-tRNA synthetase family. Homodimer. The cofactor is Zn(2+).

Its subcellular location is the cytoplasm. It carries out the reaction tRNA(Thr) + L-threonine + ATP = L-threonyl-tRNA(Thr) + AMP + diphosphate + H(+). In terms of biological role, catalyzes the attachment of threonine to tRNA(Thr) in a two-step reaction: L-threonine is first activated by ATP to form Thr-AMP and then transferred to the acceptor end of tRNA(Thr). Also edits incorrectly charged L-seryl-tRNA(Thr). The chain is Threonine--tRNA ligase from Streptococcus pyogenes serotype M1.